Here is a 65-residue protein sequence, read N- to C-terminus: Large ribosomal subunit protein bL35 (65 aa).

The segment covering Met1–Val16 has biased composition (basic residues). The disordered stretch occupies residues Met1–Gln26.

Belongs to the bacterial ribosomal protein bL35 family.

This Azoarcus sp. (strain BH72) protein is Large ribosomal subunit protein bL35.